Here is a 595-residue protein sequence, read N- to C-terminus: Chaperone protein HscA homolog (595 aa).

This sequence belongs to the heat shock protein 70 family.

In terms of biological role, chaperone involved in the maturation of iron-sulfur cluster-containing proteins. Has a low intrinsic ATPase activity which is markedly stimulated by HscB. The sequence is that of Chaperone protein HscA homolog from Rickettsia akari (strain Hartford).